Consider the following 134-residue polypeptide: Small ribosomal subunit protein uS9 (134 aa).

Residues 114 to 134 are disordered; it reads QKESKNFGGPGARAKYQKSYR.

The protein belongs to the universal ribosomal protein uS9 family.

The protein is Small ribosomal subunit protein uS9 of Methanosarcina acetivorans (strain ATCC 35395 / DSM 2834 / JCM 12185 / C2A).